The primary structure comprises 262 residues: Diphthine synthase (262 aa).

S-adenosyl-L-methionine contacts are provided by residues Leu10, Asp87, Val90, 115–116 (SI), Leu166, Ala209, and His234.

It belongs to the diphthine synthase family. As to quaternary structure, homodimer.

The enzyme catalyses 2-[(3S)-amino-3-carboxypropyl]-L-histidyl-[translation elongation factor 2] + 3 S-adenosyl-L-methionine = diphthine-[translation elongation factor 2] + 3 S-adenosyl-L-homocysteine + 3 H(+). The protein operates within protein modification; peptidyl-diphthamide biosynthesis. Its function is as follows. S-adenosyl-L-methionine-dependent methyltransferase that catalyzes the trimethylation of the amino group of the modified target histidine residue in translation elongation factor 2 (EF-2), to form an intermediate called diphthine. The three successive methylation reactions represent the second step of diphthamide biosynthesis. The protein is Diphthine synthase of Pyrococcus abyssi (strain GE5 / Orsay).